The primary structure comprises 78 residues: Putative membrane protein insertion efficiency factor (78 aa).

Belongs to the UPF0161 family.

The protein resides in the cell inner membrane. Functionally, could be involved in insertion of integral membrane proteins into the membrane. This Roseobacter denitrificans (strain ATCC 33942 / OCh 114) (Erythrobacter sp. (strain OCh 114)) protein is Putative membrane protein insertion efficiency factor.